Reading from the N-terminus, the 119-residue chain is Large ribosomal subunit protein bL12 (119 aa).

It belongs to the bacterial ribosomal protein bL12 family. In terms of assembly, homodimer. Part of the ribosomal stalk of the 50S ribosomal subunit. Forms a multimeric L10(L12)X complex, where L10 forms an elongated spine to which 2 to 4 L12 dimers bind in a sequential fashion. Binds GTP-bound translation factors.

Its function is as follows. Forms part of the ribosomal stalk which helps the ribosome interact with GTP-bound translation factors. Is thus essential for accurate translation. This is Large ribosomal subunit protein bL12 from Lysinibacillus sphaericus (strain C3-41).